We begin with the raw amino-acid sequence, 117 residues long: MDMRVPAQLLGLLLLWFPGSRCDIQMTQSPSSVSASVGDRVTITCRASQGISSWLAWYQQKPGKAPKLLIYAASSLQSGVPSRFSGSGSGTDFTLTISSLQPEDFATYYCQQANSFP.

The signal sequence occupies residues 1 to 22 (MDMRVPAQLLGLLLLWFPGSRC). Residues 23 to 45 (DIQMTQSPSSVSASVGDRVTITC) are framework-1. Residues 24-117 (IQMTQSPSSV…YYCQQANSFP (94 aa)) form the Ig-like domain. Cys45 and Cys110 are oxidised to a cystine. The tract at residues 46-56 (RASQGISSWLA) is complementarity-determining-1. The segment at 57 to 71 (WYQQKPGKAPKLLIY) is framework-2. Residues 72–78 (AASSLQS) form a complementarity-determining-2 region. The interval 79–110 (GVPSRFSGSGSGTDFTLTISSLQPEDFATYYC) is framework-3. A complementarity-determining-3 region spans residues 111 to 117 (QQANSFP).

As to quaternary structure, immunoglobulins are composed of two identical heavy chains and two identical light chains; disulfide-linked.

Its subcellular location is the secreted. It localises to the cell membrane. Its function is as follows. V region of the variable domain of immunoglobulin light chains that participates in the antigen recognition. Immunoglobulins, also known as antibodies, are membrane-bound or secreted glycoproteins produced by B lymphocytes. In the recognition phase of humoral immunity, the membrane-bound immunoglobulins serve as receptors which, upon binding of a specific antigen, trigger the clonal expansion and differentiation of B lymphocytes into immunoglobulins-secreting plasma cells. Secreted immunoglobulins mediate the effector phase of humoral immunity, which results in the elimination of bound antigens. The antigen binding site is formed by the variable domain of one heavy chain, together with that of its associated light chain. Thus, each immunoglobulin has two antigen binding sites with remarkable affinity for a particular antigen. The variable domains are assembled by a process called V-(D)-J rearrangement and can then be subjected to somatic hypermutations which, after exposure to antigen and selection, allow affinity maturation for a particular antigen. The chain is Immunoglobulin kappa variable 1-12 from Homo sapiens (Human).